The sequence spans 419 residues: Pygopus homolog 1 (419 aa).

Disordered regions lie at residues 1 to 64 (MPAE…PNSD) and 175 to 338 (HFRQ…SSSD). Over residues 18–30 (GDSGLDGLGGPGV) the composition is skewed to gly residues. Positions 35–41 (PDKKKRK) match the Nuclear localization signal motif. Composition is skewed to polar residues over residues 175–221 (HFRQ…SNHS) and 240–255 (DFTQGATKNTNQNSSA). Residues 276–286 (VNRNNAVNQEN) show a composition bias toward low complexity. Over residues 287–307 (SRSSSTEATNNNPANGTQNKP) the composition is skewed to polar residues. The PHD-type zinc-finger motif lies at 340 to 398 (VYPCGICTNEVNDDQDAILCEASCQKWFHRICTGMTETAYGLLTAEASAVWGCDTCMAD). The interval 341–388 (YPCGICTNEVNDDQDAILCEASCQKWFHRICTGMTETAYGLLTAEASA) is interaction with H3K4me2. Positions 373-391 (GMTETAYGLLTAEASAVWG) are interaction with BCL9.

As to quaternary structure, interacts with BCL9 via The PHD-type zinc finger motiv, and thereby becomes part of the nuclear beta-catenin/TCF complex. Identified in a complex with BCL9L, CDC73, CTNNB1 and PYGO1. Interacts with histone H3 mono-, di- or tri-methylated at 'Lys4' (H3K4me1, H3K4me2, H3K4me3); the interaction is enhanced by the interaction with BCL9.

Its subcellular location is the nucleus. In terms of biological role, involved in signal transduction through the Wnt pathway. This Homo sapiens (Human) protein is Pygopus homolog 1 (PYGO1).